The following is a 149-amino-acid chain: Large ribosomal subunit protein bL9 (149 aa).

This sequence belongs to the bacterial ribosomal protein bL9 family.

Its function is as follows. Binds to the 23S rRNA. This chain is Large ribosomal subunit protein bL9, found in Xanthomonas campestris pv. campestris (strain 8004).